Here is a 199-residue protein sequence, read N- to C-terminus: Peroxynitrite isomerase (199 aa).

The GXWXGXG signature appears at 21 to 27 (GEWEGRG). Heme b is bound at residue H190.

This sequence belongs to the nitrobindin family. In terms of assembly, homodimer. Heme b serves as cofactor.

It catalyses the reaction peroxynitrite = nitrate. It participates in nitrogen metabolism. Functionally, heme-binding protein able to scavenge peroxynitrite and to protect free L-tyrosine against peroxynitrite-mediated nitration, by acting as a peroxynitrite isomerase that converts peroxynitrite to nitrate. Therefore, this protein likely plays a role in peroxynitrite sensing and in the detoxification of reactive nitrogen and oxygen species (RNS and ROS, respectively). Is able to bind nitric oxide (NO) in vitro, but may act as a sensor of peroxynitrite levels in vivo. This Paenarthrobacter aurescens (strain TC1) protein is Peroxynitrite isomerase.